We begin with the raw amino-acid sequence, 281 residues long: Microtubule-associated protein RP/EB family member 3 (281 aa).

Residues 14–116 (NLSRHDMLAW…FIQWFKKFFD (103 aa)) form the Calponin-homology (CH) domain. Disordered stretches follow at residues 157-181 (VPQR…VAPP) and 260-281 (EGFA…QDEY). Over residues 158–175 (PQRTSPTGPKNMQTSGRL) the composition is skewed to polar residues. Serine 162 and serine 176 each carry phosphoserine. Residues 194 to 264 (GGHEADAQIL…LYATEEGFAP (71 aa)) form the EB1 C-terminal domain. An APC-binding region spans residues 217-260 (DGLEKERDFYFSKLRDIELICQEHESENSPVISGIIGILYATEE). Residues 217-281 (DGLEKERDFY…EHQQEDQDEY (65 aa)) form a DCTN1-binding region. A compositionally biased stretch (basic and acidic residues) spans 272-281 (EHQQEDQDEY).

It belongs to the MAPRE family. In terms of assembly, homodimer. Heterodimer with MAPRE1. Binds monomeric and polymerized GTP-bound tubulin. Interacts with DCTN1 and SRCIN1. Binds to the C-terminal domain of APC. Interacts (via C-terminus) with CLIP1. Interacts with SLAIN2. Interacts with SLAIN1. Interacts with APC2. Interacts with AKAP9. Interacts with PDE4DIP isoform 2/MMG8/SMYLE; this interaction is required for its recruitment to the Golgi apparatus.

It is found in the cytoplasm. The protein resides in the cytoskeleton. Its function is as follows. Plus-end tracking protein (+TIP) that binds to the plus-end of microtubules and regulates the dynamics of the microtubule cytoskeleton. Promotes microtubule growth. May be involved in spindle function by stabilizing microtubules and anchoring them at centrosomes. Also acts as a regulator of minus-end microtubule organization: interacts with the complex formed by AKAP9 and PDE4DIP, leading to recruit CAMSAP2 to the Golgi apparatus, thereby tethering non-centrosomal minus-end microtubules to the Golgi, an important step for polarized cell movement. Promotes elongation of CAMSAP2-decorated microtubule stretches on the minus-end of microtubules. The polypeptide is Microtubule-associated protein RP/EB family member 3 (Mapre3) (Mus musculus (Mouse)).